Consider the following 246-residue polypeptide: Ribonuclease PH (246 aa).

Phosphate-binding positions include R91 and 129 to 131 (GTR).

The protein belongs to the RNase PH family. As to quaternary structure, homohexameric ring arranged as a trimer of dimers.

The enzyme catalyses tRNA(n+1) + phosphate = tRNA(n) + a ribonucleoside 5'-diphosphate. In terms of biological role, phosphorolytic 3'-5' exoribonuclease that plays an important role in tRNA 3'-end maturation. Removes nucleotide residues following the 3'-CCA terminus of tRNAs; can also add nucleotides to the ends of RNA molecules by using nucleoside diphosphates as substrates, but this may not be physiologically important. Probably plays a role in initiation of 16S rRNA degradation (leading to ribosome degradation) during starvation. The chain is Ribonuclease PH from Burkholderia ambifaria (strain ATCC BAA-244 / DSM 16087 / CCUG 44356 / LMG 19182 / AMMD) (Burkholderia cepacia (strain AMMD)).